The chain runs to 230 residues: uncharacterized protein (230 aa).

Active-site charge relay system residues include serine 124 and histidine 158.

It belongs to the peptidase S51 family.

This is an uncharacterized protein from Bacillus subtilis (strain 168).